The sequence spans 318 residues: L-malyl-CoA/beta-methylmalyl-CoA lyase (318 aa).

Substrate contacts are provided by phenylalanine 19, arginine 24, lysine 30, and arginine 76. Positions 141 and 168 each coordinate Mg(2+). Residues 167-168 (AD) and 251-252 (IH) contribute to the substrate site.

This sequence belongs to the HpcH/HpaI aldolase family. Homohexamer. Dimer of trimers. It depends on Mg(2+) as a cofactor. Mn(2+) serves as cofactor.

It catalyses the reaction (S)-malyl-CoA = glyoxylate + acetyl-CoA. The catalysed reaction is (2R,3S)-beta-methylmalyl-CoA = propanoyl-CoA + glyoxylate. Involved in the ethylmalonyl-CoA pathway for acetate assimilation. Catalyzes the reversible condensation of glyoxylate and acetyl-CoA to L-malyl-CoA and the reversible condensation of glyoxylate and propionyl-CoA to yield beta-methylmalyl-CoA. This Cereibacter sphaeroides (strain ATCC 17029 / ATH 2.4.9) (Rhodobacter sphaeroides) protein is L-malyl-CoA/beta-methylmalyl-CoA lyase.